Consider the following 349-residue polypeptide: tRNA pseudouridine synthase D (349 aa).

Residue phenylalanine 27 participates in substrate binding. Aspartate 80 (nucleophile) is an active-site residue. Asparagine 129 serves as a coordination point for substrate. In terms of domain architecture, TRUD spans 155-303 (GVPNYFGAQR…VEAARRAMLL (149 aa)). Residue phenylalanine 329 participates in substrate binding.

The protein belongs to the pseudouridine synthase TruD family.

It carries out the reaction uridine(13) in tRNA = pseudouridine(13) in tRNA. In terms of biological role, responsible for synthesis of pseudouridine from uracil-13 in transfer RNAs. The protein is tRNA pseudouridine synthase D of Klebsiella pneumoniae subsp. pneumoniae (strain ATCC 700721 / MGH 78578).